A 283-amino-acid polypeptide reads, in one-letter code: Polyamine aminopropyltransferase (283 aa).

Residues 2–237 (ELWYTEEHTD…GHWLFGFASK (236 aa)) form the PABS domain. Gln31 contributes to the S-methyl-5'-thioadenosine binding site. The spermidine site is built by His62 and Asp86. Residues Glu106 and 137–138 (DG) each bind S-methyl-5'-thioadenosine. Catalysis depends on Asp155, which acts as the Proton acceptor. 155–158 (DSTD) is a spermidine binding site. Pro162 provides a ligand contact to S-methyl-5'-thioadenosine.

This sequence belongs to the spermidine/spermine synthase family. Homodimer or homotetramer.

Its subcellular location is the cytoplasm. It catalyses the reaction S-adenosyl 3-(methylsulfanyl)propylamine + putrescine = S-methyl-5'-thioadenosine + spermidine + H(+). Its pathway is amine and polyamine biosynthesis; spermidine biosynthesis; spermidine from putrescine: step 1/1. Functionally, catalyzes the irreversible transfer of a propylamine group from the amino donor S-adenosylmethioninamine (decarboxy-AdoMet) to putrescine (1,4-diaminobutane) to yield spermidine. This Clostridium perfringens (strain 13 / Type A) protein is Polyamine aminopropyltransferase.